The following is a 416-amino-acid chain: Vacuole membrane protein KMS1 (416 aa).

Gly2 carries the N-acetylglycine modification. Residues 2 to 60 (GSAGVASSSSDVAISALREKHEKEVENLTLTTQPLNTLKLFVEATIQYIKRSISYLLAH) lie on the Cytoplasmic side of the membrane. A helical membrane pass occupies residues 61–81 (GGWFILITTLLVVSGGLLVTV). At 82–101 (DGPHGKHVEEVLEYVRYGLW) the chain is on the lumenal side. Residues 102–124 (WIALGVASSIGLGSGLHTFVLYL) form a helical membrane-spanning segment. Residues 125 to 257 (GPHIALFTLK…WLLTHSQHLN (133 aa)) are Cytoplasmic-facing. Residues 258–278 (FFTVLVLASVPNPLFDLAGIM) traverse the membrane as a helical segment. Over 279 to 289 (CGQFGIPFWEF) the chain is Lumenal. Residues 290–312 (FLATLIGKAIIKTHIQTIFIICV) traverse the membrane as a helical segment. At 313 to 323 (CNNQLLDWMEN) the chain is on the cytoplasmic side. Residues 324 to 344 (ELIWILSHVPGLASMLPGLTA) form a helical membrane-spanning segment. Topologically, residues 345-372 (KLHAMKEKYIDAPSPVPSHIKVKKWDFS) are lumenal. The helical transmembrane segment at 373-393 (FASIWNGIVWLMLLNFFVKIV) threads the bilayer. The Cytoplasmic portion of the chain corresponds to 394-416 (TATAQRHLKKKQEKEMATLTHSD).

It belongs to the VMP1 family.

Its subcellular location is the endoplasmic reticulum membrane. In terms of biological role, involved in the early secretory pathway. Required for the correct export of secretory products from the endoplasmic reticulum (ER) and involved in the maintenance of ER integrity. The sequence is that of Vacuole membrane protein KMS1 from Arabidopsis thaliana (Mouse-ear cress).